The primary structure comprises 267 residues: 4-hydroxy-tetrahydrodipicolinate reductase (267 aa).

NAD(+) contacts are provided by residues 9 to 14 and aspartate 35; that span reads GAGGRM. An NADP(+)-binding site is contributed by arginine 36. Residues 99–101 and 123–126 each bind NAD(+); these read GTT and AANY. The active-site Proton donor/acceptor is histidine 156. Residue histidine 157 participates in (S)-2,3,4,5-tetrahydrodipicolinate binding. Lysine 160 acts as the Proton donor in catalysis. 166 to 167 lines the (S)-2,3,4,5-tetrahydrodipicolinate pocket; sequence GT.

This sequence belongs to the DapB family.

It localises to the cytoplasm. The enzyme catalyses (S)-2,3,4,5-tetrahydrodipicolinate + NAD(+) + H2O = (2S,4S)-4-hydroxy-2,3,4,5-tetrahydrodipicolinate + NADH + H(+). It carries out the reaction (S)-2,3,4,5-tetrahydrodipicolinate + NADP(+) + H2O = (2S,4S)-4-hydroxy-2,3,4,5-tetrahydrodipicolinate + NADPH + H(+). It functions in the pathway amino-acid biosynthesis; L-lysine biosynthesis via DAP pathway; (S)-tetrahydrodipicolinate from L-aspartate: step 4/4. Catalyzes the conversion of 4-hydroxy-tetrahydrodipicolinate (HTPA) to tetrahydrodipicolinate. The polypeptide is 4-hydroxy-tetrahydrodipicolinate reductase (Halorhodospira halophila (strain DSM 244 / SL1) (Ectothiorhodospira halophila (strain DSM 244 / SL1))).